A 371-amino-acid chain; its full sequence is Aminomethyltransferase (371 aa).

The protein belongs to the GcvT family. The glycine cleavage system is composed of four proteins: P, T, L and H.

The catalysed reaction is N(6)-[(R)-S(8)-aminomethyldihydrolipoyl]-L-lysyl-[protein] + (6S)-5,6,7,8-tetrahydrofolate = N(6)-[(R)-dihydrolipoyl]-L-lysyl-[protein] + (6R)-5,10-methylene-5,6,7,8-tetrahydrofolate + NH4(+). Functionally, the glycine cleavage system catalyzes the degradation of glycine. The polypeptide is Aminomethyltransferase (Pectobacterium atrosepticum (strain SCRI 1043 / ATCC BAA-672) (Erwinia carotovora subsp. atroseptica)).